Reading from the N-terminus, the 706-residue chain is Dihydroxyacetone synthase (706 aa).

Thiamine diphosphate is bound by residues His76 and 126-128 (GPL). Positions 167, 197, and 199 each coordinate Mg(2+). A thiamine diphosphate-binding site is contributed by Asn197. Thiamine diphosphate is bound by residues His273, Glu431, and Phe459. Glu431 functions as the Proton donor in the catalytic mechanism. Residues 704 to 706 (NHL) carry the Microbody targeting signal motif.

The protein belongs to the transketolase family. Mg(2+) is required as a cofactor. It depends on Ca(2+) as a cofactor. Mn(2+) serves as cofactor. The cofactor is Co(2+). Requires thiamine diphosphate as cofactor.

Its subcellular location is the peroxisome. The catalysed reaction is D-xylulose 5-phosphate + formaldehyde = dihydroxyacetone + D-glyceraldehyde 3-phosphate. Involved in assimilation of formaldehyde. In Candida boidinii (Yeast), this protein is Dihydroxyacetone synthase (DAS1).